Reading from the N-terminus, the 62-residue chain is uncharacterized protein (62 aa).

This is an uncharacterized protein from Archaeoglobus fulgidus (strain ATCC 49558 / DSM 4304 / JCM 9628 / NBRC 100126 / VC-16).